The primary structure comprises 618 residues: 1-deoxy-D-xylulose-5-phosphate synthase (618 aa).

Thiamine diphosphate is bound by residues His70 and 111–113 (GHS). Asp142 is a Mg(2+) binding site. Residues 143–144 (GS), Asn171, Tyr278, and Glu360 each bind thiamine diphosphate. Asn171 contributes to the Mg(2+) binding site.

It belongs to the transketolase family. DXPS subfamily. In terms of assembly, homodimer. Requires Mg(2+) as cofactor. Thiamine diphosphate is required as a cofactor.

The enzyme catalyses D-glyceraldehyde 3-phosphate + pyruvate + H(+) = 1-deoxy-D-xylulose 5-phosphate + CO2. It functions in the pathway metabolic intermediate biosynthesis; 1-deoxy-D-xylulose 5-phosphate biosynthesis; 1-deoxy-D-xylulose 5-phosphate from D-glyceraldehyde 3-phosphate and pyruvate: step 1/1. Its function is as follows. Catalyzes the acyloin condensation reaction between C atoms 2 and 3 of pyruvate and glyceraldehyde 3-phosphate to yield 1-deoxy-D-xylulose-5-phosphate (DXP). This Helicobacter pylori (strain HPAG1) protein is 1-deoxy-D-xylulose-5-phosphate synthase.